Reading from the N-terminus, the 130-residue chain is Protein LLP homolog (130 aa).

Basic residues predominate over residues 1-21 (MAKSLRSKWKRKMRAEKRKKN). Disordered stretches follow at residues 1–23 (MAKSLRSKWKRKMRAEKRKKNAP) and 57–76 (QEKMQCEEGRCDGADEEKDD). Positions 10–78 (KRKMRAEKRK…GADEEKDDMK (69 aa)) form a coiled coil. Lysine 78 participates in a covalent cross-link: Glycyl lysine isopeptide (Lys-Gly) (interchain with G-Cter in SUMO2). A compositionally biased stretch (basic residues) spans 104 to 124 (RQRKRLKAKREKKRGKSRAKA). The interval 104–130 (RQRKRLKAKREKKRGKSRAKAAKGLAW) is disordered.

The protein belongs to the learning-associated protein family. Interacts with CTCF, MYO1C and with the transcriptional machinery, including RNA polymerase II and TBP. Widely expressed, with high levels in testis and spleen and low levels in heart. In the brain, expressed in the cortex and hippocampus, and at very low levels in the cerebellum.

It is found in the nucleus. The protein localises to the nucleolus. It localises to the chromosome. In hippocampal neurons, regulates dendritic and spine growth and synaptic transmission. The protein is Protein LLP homolog (Llph) of Mus musculus (Mouse).